An 831-amino-acid polypeptide reads, in one-letter code: Multiphosphoryl transfer protein (831 aa).

One can recognise an HPr domain in the interval 1–90; it reads MLTIQFLCPL…EYILVRFIDS (90 aa). H15 functions as the Pros-phosphohistidine intermediate; for HPr activity in the catalytic mechanism. H15 bears the Phosphohistidine; by EI mark. Residues 119–650 are PTS EI; that stretch reads GNVLASGVGV…AVKSQLRQLD (532 aa). Residue H298 is the Tele-phosphohistidine intermediate; for PTS EI activity of the active site. At H298 the chain carries Phosphohistidine; by autocatalysis. Phosphoenolpyruvate-binding residues include R405 and R441. Mg(2+)-binding residues include E540 and D564. Residues 563–564 and R574 each bind phosphoenolpyruvate; that span reads ND. The active-site Proton donor; for EI activity is the C611. Residues 685–828 form the PTS EIIA type-2 domain; the sequence is PLLALENIFV…QSILTLLETE (144 aa). The active-site Tele-phosphohistidine intermediate; for PTS EIIA activity is the H747. H747 carries the post-translational modification Phosphohistidine; by HPr.

Belongs to the PEP-utilizing enzyme family. The cofactor is Mg(2+).

It is found in the cytoplasm. It carries out the reaction L-histidyl-[protein] + phosphoenolpyruvate = N(pros)-phospho-L-histidyl-[protein] + pyruvate. It catalyses the reaction D-fructose(out) + N(pros)-phospho-L-histidyl-[protein] = D-fructose 1-phosphate(in) + L-histidyl-[protein]. Its function is as follows. Multifunctional protein that includes general (non sugar-specific) and sugar-specific components of the phosphoenolpyruvate-dependent sugar phosphotransferase system (sugar PTS). This major carbohydrate active transport system catalyzes the phosphorylation of incoming sugar substrates concomitantly with their translocation across the cell membrane. The enzyme II FryABC PTS system is involved in fructose transport. The protein is Multiphosphoryl transfer protein (fryA) of Shigella flexneri.